We begin with the raw amino-acid sequence, 179 residues long: NADH dehydrogenase [ubiquinone] 1 beta subcomplex subunit 9 (179 aa).

N-acetylalanine is present on Ala2. Position 85 is a phosphoserine (Ser85). Residues Glu136–Asp162 are disordered.

The protein belongs to the complex I LYR family. In terms of assembly, mammalian complex I is composed of 45 different subunits.

The protein localises to the mitochondrion inner membrane. In terms of biological role, accessory subunit of the mitochondrial membrane respiratory chain NADH dehydrogenase (Complex I), that is believed to be not involved in catalysis. Complex I functions in the transfer of electrons from NADH to the respiratory chain. The immediate electron acceptor for the enzyme is believed to be ubiquinone. The chain is NADH dehydrogenase [ubiquinone] 1 beta subcomplex subunit 9 (NDUFB9) from Pongo abelii (Sumatran orangutan).